The chain runs to 102 residues: RNA-binding protein Hfq (102 aa).

The region spanning 9-68 (DPFLNALRRERVPVSIYLVNGIKLQGQIESFDQFVILLKNTVSQMVYKHAISTVVPSRPV) is the Sm domain. The disordered stretch occupies residues 63–102 (VPSRPVSHHSNNAGGSTSSNYHHGSSAQNTSAQQDSEENE). Residues 70 to 96 (HHSNNAGGSTSSNYHHGSSAQNTSAQQ) show a composition bias toward polar residues.

This sequence belongs to the Hfq family. In terms of assembly, homohexamer.

Functionally, RNA chaperone that binds small regulatory RNA (sRNAs) and mRNAs to facilitate mRNA translational regulation in response to envelope stress, environmental stress and changes in metabolite concentrations. Also binds with high specificity to tRNAs. This chain is RNA-binding protein Hfq, found in Escherichia coli O17:K52:H18 (strain UMN026 / ExPEC).